Consider the following 136-residue polypeptide: Probable endoribonuclease MazF7 (136 aa).

The segment at 115-136 (TGPERGEAATHSPVRWTGGRDP) is disordered.

The protein belongs to the PemK/MazF family. Forms a complex with cognate antitoxin MazE7.

In terms of biological role, toxic component of a type II toxin-antitoxin (TA) system. Upon expression in E.coli and M.smegmatis inhibits cell growth and colony formation. Its toxic effect is neutralized by coexpression with cognate antitoxin MazE7. Probably an endoribonuclease. The protein is Probable endoribonuclease MazF7 (mazF7) of Mycobacterium tuberculosis (strain ATCC 25618 / H37Rv).